A 297-amino-acid chain; its full sequence is Ribosomal RNA small subunit methyltransferase H (297 aa).

S-adenosyl-L-methionine is bound by residues 34–36 (GGH), Asp-54, Phe-81, Asp-99, and Gln-106.

It belongs to the methyltransferase superfamily. RsmH family.

It is found in the cytoplasm. It carries out the reaction cytidine(1402) in 16S rRNA + S-adenosyl-L-methionine = N(4)-methylcytidine(1402) in 16S rRNA + S-adenosyl-L-homocysteine + H(+). Specifically methylates the N4 position of cytidine in position 1402 (C1402) of 16S rRNA. This is Ribosomal RNA small subunit methyltransferase H from Chlamydia pneumoniae (Chlamydophila pneumoniae).